The sequence spans 1782 residues: A-kinase anchor protein 12 (1782 aa).

8 disordered regions span residues 1–53 (MGAG…DPAT), 71–169 (QDEL…QAND), 189–400 (KTEK…APLA), 421–886 (VSTV…ELSE), 938–1089 (EREV…LKKE), 1105–1134 (PFTQGKVVGQTTPESFEKAPQVTESIESSE), 1157–1274 (AIPP…ADEK), and 1305–1355 (KGEG…HVNE). Gly2 is lipidated: N-myristoyl glycine. 5 positions are modified to phosphoserine: Ser11, Ser19, Ser28, Ser75, and Ser96. The span at 16–53 (PEGSSTPAEPEPSGGGPSAEAAPDTTADPAIAASDPAT) shows a compositional bias: low complexity. Residues 108 to 125 (GQRDSEDVSKRDSDKEMA) are compositionally biased toward basic and acidic residues. A compositionally biased stretch (low complexity) spans 145–154 (IIEQIPSSES). Phosphoserine is present on Ser154. Residues 157-168 (EELTQPTESQAN) show a composition bias toward polar residues. A phosphoserine mark is found at Ser219, Ser248, Ser258, Ser280, Ser283, Ser286, Ser347, and Ser371. The span at 226-249 (ASKESEPKQSTEKPEETLKREQSH) shows a compositional bias: basic and acidic residues. Residues 266 to 557 (KEEGEEKQEK…TQVPADSPDS (292 aa)) are involved in PKC-binding. Composition is skewed to basic and acidic residues over residues 315 to 347 (KPKEDEVEASEKKKEQEPEKVDTEEDGKAEVAS) and 363 to 379 (ESAHEPRLSAEYEKVEL). Tyr374 carries the post-translational modification Phosphotyrosine. 2 positions are modified to phosphoserine: Ser381 and Ser392. Positions 423–435 (TVEERTEEQKTEV) are enriched in basic and acidic residues. A compositionally biased stretch (acidic residues) spans 446–456 (ELVEMDAEPQE). Over residues 458–468 (EPAKELVKLKE) the composition is skewed to basic and acidic residues. Residues Ser483 and Ser505 each carry the phosphoserine modification. Residues 528–537 (LSGKKQKGKR) show a composition bias toward basic residues. Residues Ser554, Ser557, Ser598, Ser612, Ser627, and Ser629 each carry the phosphoserine modification. The AKAP CaM-binding 1 signature appears at 607 to 627 (VTPWASFKKMVTPKKRVRRPS). Residues 625-639 (RPSESDKEDELDKVK) show a composition bias toward basic and acidic residues. Residues 640-652 (SATLSSTESTASE) are compositionally biased toward low complexity. At Thr642 the chain carries Phosphothreonine. A phosphoserine mark is found at Ser644, Ser645, Ser648, and Ser651. The segment covering 655–674 (EEMKGSVEEPKPEEPKRKVD) has biased composition (basic and acidic residues). 3 positions are modified to phosphoserine: Ser696, Ser697, and Ser698. Positions 708–724 (GGDHQKADEAGKDKETG) are enriched in basic and acidic residues. Over residues 739–749 (QGSSSPEQAGS) the composition is skewed to polar residues. Phosphoserine occurs at positions 749, 761, and 787. The AKAP CaM-binding 2 signature appears at 756 to 776 (VSTWESFKRLVTPRKKSKSKL). Over residues 792–803 (STPDTEPGKEES) the composition is skewed to basic and acidic residues. An AKAP CaM-binding 3 motif is present at residues 801 to 821 (EESWVSIKKFIPGRRKKRPDG). Ser806 carries the phosphoserine modification. Residues 986–997 (GAEEGTEASAAE) show a composition bias toward low complexity. Lys1051 is covalently cross-linked (Glycyl lysine isopeptide (Lys-Gly) (interchain with G-Cter in SUMO1)). The segment covering 1072–1089 (AEAERPEEQAEASGLKKE) has biased composition (basic and acidic residues). Positions 1164–1174 (ETPTDSETDGS) are enriched in polar residues. 2 stretches are compositionally biased toward basic and acidic residues: residues 1187-1198 (QKDEIVEIHEEN) and 1231-1251 (EETKEQSKMEDTLEHTDKEVS). The span at 1253–1267 (ETVSILSKTEGTQEA) shows a compositional bias: polar residues. Ser1328 and Ser1331 each carry phosphoserine. A compositionally biased stretch (basic and acidic residues) spans 1333–1355 (VEREMVVQVEREKTEAEPTHVNE). 2 positions are modified to phosphoserine: Ser1391 and Ser1395. Residues 1541 to 1554 (ELETKSSKLVQNII) form an RII-binding region. The segment at 1584-1782 (KADSQDAGQE…ESAKSELTES (199 aa)) is disordered. Ser1587 carries the post-translational modification Phosphoserine. Positions 1603–1612 (ASAQDETPIT) are enriched in polar residues. Basic and acidic residues-rich tracts occupy residues 1629–1639 (DISKDMSEASE) and 1675–1699 (VPEDDGHALLAERIEKSLVEPKEDE). At Ser1727 the chain carries Phosphoserine. Basic and acidic residues-rich tracts occupy residues 1734-1757 (KQKEKEDAQEVELQEGKVHSESDK) and 1766-1782 (ELQKQERESAKSELTES).

As to quaternary structure, binds to dimeric RII-alpha regulatory subunit of PKC. In terms of tissue distribution, expressed in endothelial cells, cultured fibroblasts and osteosarcoma, but not in platelets, leukocytes, monocytic cell lines or peripherical blood cells.

The protein resides in the cytoplasm. The protein localises to the cell cortex. It is found in the cytoskeleton. Its subcellular location is the membrane. In terms of biological role, anchoring protein that mediates the subcellular compartmentation of protein kinase A (PKA) and protein kinase C (PKC). This is A-kinase anchor protein 12 (AKAP12) from Homo sapiens (Human).